The chain runs to 332 residues: Isopentenyl-diphosphate delta-isomerase (332 aa).

Arg-6 to Lys-7 serves as a coordination point for substrate. Residues Ala-65–Thr-67, Ser-95, and Asn-123 contribute to the FMN site. Substrate is bound at residue Ser-95 to Arg-97. A substrate-binding site is contributed by Gln-157. Residue Glu-158 participates in Mg(2+) binding. FMN is bound by residues Lys-187, Thr-217, Gly-264–Tyr-266, Ala-285, and Ala-285–Arg-286.

This sequence belongs to the IPP isomerase type 2 family. As to quaternary structure, homooctamer. Dimer of tetramers. FMN serves as cofactor. It depends on NADPH as a cofactor. Requires Mg(2+) as cofactor.

The protein resides in the cytoplasm. It carries out the reaction isopentenyl diphosphate = dimethylallyl diphosphate. Competitively inhibited by N,N-dimethyl-2-amino-1-ethyl diphosphate (NIPP) and isopentyl diphosphate. Functionally, involved in the biosynthesis of isoprenoids. Catalyzes the 1,3-allylic rearrangement of the homoallylic substrate isopentenyl (IPP) to its allylic isomer, dimethylallyl diphosphate (DMAPP). The chain is Isopentenyl-diphosphate delta-isomerase from Thermus thermophilus (strain ATCC BAA-163 / DSM 7039 / HB27).